The primary structure comprises 543 residues: Zinc finger protein tra-4 (543 aa).

The disordered stretch occupies residues 1-38; it reads MDDPNQCTIKQEDSITRPRPTEAPTIQNLKQEPAIEEG. A compositionally biased stretch (basic and acidic residues) spans 10–20; it reads KQEDSITRPRP. 7 consecutive C2H2-type zinc fingers follow at residues 218-241, 327-350, 381-406, 413-436, 442-464, 470-493, and 495-518; these read VRCKKCKNRFIEKNIYERHLRDKH, PQCPFCDKRFRNEFSLKKHFAKKH, YVCFECTPIRNLCTDNRLLNHRKKFH, FRCSFCNMKFLTPRKLRKHKKMSH, FQCHFCEEIFISEVAVMTHERMH, FECKVCDFRANRYTAMEEHKRDEH, and YVCAICHERHAEYPEMKHHVYEEH.

It belongs to the krueppel C2H2-type zinc-finger protein family. In terms of assembly, interacts with histone deacetylase hda-1. May interact with nasp-1.

The protein resides in the nucleus. Functionally, probable transcription factor. Promotes normal hermaphrodite (XX) development, in concert with histone deacetylase hda-1 and nasp-1, perhaps as components of a complex. May cooperate with transcription factor tra-1 to repress male-specific genes in hermaphrodites. Synthetic multivulva (synMuv) class B protein, required to repress the induction of vulval development by let-60 Ras signaling. In Caenorhabditis elegans, this protein is Zinc finger protein tra-4.